The primary structure comprises 337 residues: Probable arabinose 5-phosphate isomerase (337 aa).

In terms of domain architecture, SIS spans 58–201 (VIDLILACEG…AVSLITARNF (144 aa)). Residues 92 to 93 (GT), H99, H105, 131 to 140 (KLIPSLKNFG), 165 to 167 (TVE), T237, and D290 contribute to the substrate site. H99 lines the Zn(2+) pocket. Positions 227-284 (MQTRLPTILPTTNFTDCLTVMNEGRMGVALVMENEQLKGIITDGDIRRALTANGAGTL) constitute a CBS 1 domain. Positions 292-337 (MTSSPKTIHQDEFLSKAEDFMKAKKIHSLVVVNDENHVVGLVEFSS) constitute a CBS 2 domain.

Belongs to the SIS family. GutQ/KpsF subfamily.

The enzyme catalyses D-arabinose 5-phosphate = D-ribulose 5-phosphate. In terms of biological role, catalyzes the reversible aldol-ketol isomerization between D-ribulose 5-phosphate (Ru5P) and D-arabinose 5-phosphate (A5P). The chain is Probable arabinose 5-phosphate isomerase from Haemophilus influenzae (strain ATCC 51907 / DSM 11121 / KW20 / Rd).